Reading from the N-terminus, the 346-residue chain is Protein MelA (346 aa).

VOC domains follow at residues Gly-12–Ala-141 and Glu-155–Lys-305. Positions 158, 237, and 314 each coordinate Fe cation.

The protein belongs to the 4HPPD family. It depends on Fe cation as a cofactor.

It is found in the cytoplasm. The protein operates within pigment biosynthesis; melanin biosynthesis. The sequence is that of Protein MelA (melA) from Shewanella colwelliana (Alteromonas colwelliana).